The primary structure comprises 374 residues: Biotin synthase (374 aa).

A Radical SAM core domain is found at 51 to 278 (NTVKVNYLVN…DTEIRIAGGR (228 aa)). Cys66, Cys70, and Cys73 together coordinate [4Fe-4S] cluster. 4 residues coordinate [2Fe-2S] cluster: Cys110, Cys143, Cys203, and Arg273. The disordered stretch occupies residues 346 to 374 (IAGGTSVAGSAPDPAIRRRGAGTDVPANA).

Belongs to the radical SAM superfamily. Biotin synthase family. As to quaternary structure, homodimer. [4Fe-4S] cluster is required as a cofactor. The cofactor is [2Fe-2S] cluster.

It carries out the reaction (4R,5S)-dethiobiotin + (sulfur carrier)-SH + 2 reduced [2Fe-2S]-[ferredoxin] + 2 S-adenosyl-L-methionine = (sulfur carrier)-H + biotin + 2 5'-deoxyadenosine + 2 L-methionine + 2 oxidized [2Fe-2S]-[ferredoxin]. It participates in cofactor biosynthesis; biotin biosynthesis; biotin from 7,8-diaminononanoate: step 2/2. In terms of biological role, catalyzes the conversion of dethiobiotin (DTB) to biotin by the insertion of a sulfur atom into dethiobiotin via a radical-based mechanism. In Nocardioides sp. (strain ATCC BAA-499 / JS614), this protein is Biotin synthase.